Reading from the N-terminus, the 114-residue chain is Large ribosomal subunit protein bL20 (114 aa).

This sequence belongs to the bacterial ribosomal protein bL20 family.

In terms of biological role, binds directly to 23S ribosomal RNA and is necessary for the in vitro assembly process of the 50S ribosomal subunit. It is not involved in the protein synthesizing functions of that subunit. The protein is Large ribosomal subunit protein bL20 of Anaeromyxobacter sp. (strain Fw109-5).